Consider the following 371-residue polypeptide: DNA repair protein RAD14 (371 aa).

Positions 26-48 (LSSDQLNRIESRNEPLKTRPLAV) are disordered. Positions 32 to 42 (NRIESRNEPLK) are enriched in basic and acidic residues. Residues Cys-191, Cys-194, Cys-213, and Cys-216 each coordinate Zn(2+). A zinc finger spans residues 191-216 (CIECHINIEMDPVLHDVFKLQVCKQC).

This sequence belongs to the XPA family. As to quaternary structure, two monomers bind to kinked/damaged DNA (construct with only the C-terminal DNA-binding domain). Component of the nucleotide excision repair factor 1 (NEF1) complex consisting of RAD1, RAD10 and RAD14.

The protein resides in the nucleus. Functionally, involved in nucleotide excision repair. Binds specifically to damaged DNA. Required for the incision step. The polypeptide is DNA repair protein RAD14 (RAD14) (Saccharomyces cerevisiae (strain ATCC 204508 / S288c) (Baker's yeast)).